We begin with the raw amino-acid sequence, 370 residues long: Aminomethyltransferase (370 aa).

Belongs to the GcvT family. The glycine cleavage system is composed of four proteins: P, T, L and H.

It catalyses the reaction N(6)-[(R)-S(8)-aminomethyldihydrolipoyl]-L-lysyl-[protein] + (6S)-5,6,7,8-tetrahydrofolate = N(6)-[(R)-dihydrolipoyl]-L-lysyl-[protein] + (6R)-5,10-methylene-5,6,7,8-tetrahydrofolate + NH4(+). In terms of biological role, the glycine cleavage system catalyzes the degradation of glycine. The protein is Aminomethyltransferase of Stenotrophomonas maltophilia (strain K279a).